Reading from the N-terminus, the 275-residue chain is Bis(5'-nucleosyl)-tetraphosphatase, symmetrical (275 aa).

It belongs to the Ap4A hydrolase family.

It catalyses the reaction P(1),P(4)-bis(5'-adenosyl) tetraphosphate + H2O = 2 ADP + 2 H(+). Functionally, hydrolyzes diadenosine 5',5'''-P1,P4-tetraphosphate to yield ADP. In Actinobacillus succinogenes (strain ATCC 55618 / DSM 22257 / CCUG 43843 / 130Z), this protein is Bis(5'-nucleosyl)-tetraphosphatase, symmetrical.